Consider the following 96-residue polypeptide: Transcription and mRNA export factor SUS1 (96 aa).

K68 is covalently cross-linked (Glycyl lysine isopeptide (Lys-Gly) (interchain with G-Cter in ubiquitin)).

The protein belongs to the ENY2 family. Component of the nuclear pore complex (NPC)-associated TREX-2 complex (transcription and export complex 2), composed of at least SUS1, SAC3, THP1, SEM1, and CDC31. TREX-2 contains 2 SUS1 chains. The TREX-2 complex interacts with the nucleoporin NUP1. Component of the 1.8 MDa SAGA transcription coactivator-HAT complex. SAGA is built of 5 distinct domains with specialized functions. Within the SAGA complex, SUS1, SGF11, SGF73 and UBP8 form an additional subcomplex of SAGA called the DUB module (deubiquitination module). Interacts directly with THP1, SAC3, SGF11, and with the RNA polymerase II.

The protein resides in the nucleus. Its subcellular location is the nucleoplasm. It is found in the cytoplasm. It localises to the P-body. In terms of biological role, involved in mRNA export coupled transcription activation by association with both the TREX-2 and the SAGA complexes. At the promoters, SAGA is required for recruitment of the basal transcription machinery. It influences RNA polymerase II transcriptional activity through different activities such as TBP interaction and promoter selectivity, interaction with transcription activators, and chromatin modification through histone acetylation and deubiquitination. Within the SAGA complex, participates in a subcomplex required for deubiquitination of H2B and for the maintenance of steady-state H3 methylation levels. The TREX-2 complex functions in docking export-competent ribonucleoprotein particles (mRNPs) to the nuclear entrance of the nuclear pore complex (nuclear basket). TREX-2 participates in mRNA export and accurate chromatin positioning in the nucleus by tethering genes to the nuclear periphery. May also be involved in cytoplasmic mRNA decay by interaction with components of P-bodies. The chain is Transcription and mRNA export factor SUS1 from Saccharomyces cerevisiae (strain YJM789) (Baker's yeast).